The primary structure comprises 212 residues: MSLFDKKHLVSPADALPGRNTPMPVATLHAVNGHSMTNVPDGMEIAIFAMGCFWGVERLFWQLHGVYSTAAGYTGGYTPNPTYREVCSGDTGHAEAVRIVYDPSVISYEQLLQVFWENHDPAQGMRQGNDHGTQYRSAIYPLTPEQDAAARASLERFQAAMLAADDDRRITTEIANATPFYYAEDDHQQYLHKNPYGYCGIGGIGVCLPPEA.

C52 is a catalytic residue.

Belongs to the MsrA Met sulfoxide reductase family.

It catalyses the reaction L-methionyl-[protein] + [thioredoxin]-disulfide + H2O = L-methionyl-(S)-S-oxide-[protein] + [thioredoxin]-dithiol. The catalysed reaction is [thioredoxin]-disulfide + L-methionine + H2O = L-methionine (S)-S-oxide + [thioredoxin]-dithiol. In terms of biological role, has an important function as a repair enzyme for proteins that have been inactivated by oxidation. Catalyzes the reversible oxidation-reduction of methionine sulfoxide in proteins to methionine. The sequence is that of Peptide methionine sulfoxide reductase MsrA from Escherichia coli O127:H6 (strain E2348/69 / EPEC).